The sequence spans 184 residues: MKRLSVLFALVASPALAASGPFFSLRNTDFIVTLAFLLFVGILVYFRVPQIVGGLLDKRAEGIRNDLAEARRLREEAQEIYASYERRQREVKSQADDIVANAKREAVAEAEKAKKALQLSIERRLKAAEEQIAGAEAEAVRAVRDRAIQTAIAAATEILGKQASPAERSAGIDKAIDEVAQRLN.

Residues 4–24 (LSVLFALVASPALAASGPFFS) traverse the membrane as a helical segment.

This sequence belongs to the ATPase B chain family. As to quaternary structure, F-type ATPases have 2 components, F(1) - the catalytic core - and F(0) - the membrane proton channel. F(1) has five subunits: alpha(3), beta(3), gamma(1), delta(1), epsilon(1). F(0) has three main subunits: a(1), b(2) and c(10-14). The alpha and beta chains form an alternating ring which encloses part of the gamma chain. F(1) is attached to F(0) by a central stalk formed by the gamma and epsilon chains, while a peripheral stalk is formed by the delta and b chains.

Its subcellular location is the cell inner membrane. Functionally, f(1)F(0) ATP synthase produces ATP from ADP in the presence of a proton or sodium gradient. F-type ATPases consist of two structural domains, F(1) containing the extramembraneous catalytic core and F(0) containing the membrane proton channel, linked together by a central stalk and a peripheral stalk. During catalysis, ATP synthesis in the catalytic domain of F(1) is coupled via a rotary mechanism of the central stalk subunits to proton translocation. Its function is as follows. Component of the F(0) channel, it forms part of the peripheral stalk, linking F(1) to F(0). The protein is ATP synthase subunit b of Paracoccus denitrificans (strain Pd 1222).